The primary structure comprises 334 residues: S-adenosylmethionine decarboxylase proenzyme (334 aa).

Phe7 contributes to the substrate binding site. Active-site residues include Glu8 and Glu11. A substrate-binding site is contributed by Glu67. The active-site Schiff-base intermediate with substrate; via pyruvic acid is Ser68. A Pyruvic acid (Ser); by autocatalysis modification is found at Ser68. Cys82 serves as the catalytic Proton donor; for catalytic activity. Residue Phe223 coordinates substrate. Active-site proton acceptor; for processing activity residues include Ser229 and His243. Glu247 is a substrate binding site. Ser298 bears the Phosphoserine mark.

The protein belongs to the eukaryotic AdoMetDC family. In terms of assembly, heterotetramer of two alpha and two beta chains. Requires pyruvate as cofactor. In terms of processing, is synthesized initially as an inactive proenzyme. Formation of the active enzyme involves a self-maturation process in which the active site pyruvoyl group is generated from an internal serine residue via an autocatalytic post-translational modification. Two non-identical subunits are generated from the proenzyme in this reaction, and the pyruvate is formed at the N-terminus of the alpha chain, which is derived from the carboxyl end of the proenzyme. The post-translation cleavage follows an unusual pathway, termed non-hydrolytic serinolysis, in which the side chain hydroxyl group of the serine supplies its oxygen atom to form the C-terminus of the beta chain, while the remainder of the serine residue undergoes an oxidative deamination to produce ammonia and the pyruvoyl group blocking the N-terminus of the alpha chain.

It carries out the reaction S-adenosyl-L-methionine + H(+) = S-adenosyl 3-(methylsulfanyl)propylamine + CO2. The protein operates within amine and polyamine biosynthesis; S-adenosylmethioninamine biosynthesis; S-adenosylmethioninamine from S-adenosyl-L-methionine: step 1/1. Functionally, essential for biosynthesis of the polyamines spermidine and spermine. Promotes maintenance and self-renewal of embryonic stem cells, by maintaining spermine levels. The sequence is that of S-adenosylmethionine decarboxylase proenzyme (AMD1) from Mesocricetus auratus (Golden hamster).